The chain runs to 439 residues: Putative phosphatidate cytidylyltransferase (439 aa).

The interval 1-37 (MARKRTNKRNNSDKENGNVGVVQNKDSASSKTTEPAR) is disordered. Ser-12 is modified (phosphoserine). Residues 24-33 (NKDSASSKTT) show a composition bias toward polar residues. The next 7 membrane-spanning stretches (helical) occupy residues 52 to 71 (FITR…TALA), 76 to 98 (WVVL…IASV), 110 to 130 (FINW…SIYA), 145 to 165 (LVLH…VLFV), 180 to 199 (FCWT…FMIN), 245 to 265 (GFLG…YVLM), and 321 to 341 (FHLA…GFFA).

The protein belongs to the CDS family. The cofactor is Mg(2+).

It localises to the endoplasmic reticulum membrane. The catalysed reaction is a 1,2-diacyl-sn-glycero-3-phosphate + CTP + H(+) = a CDP-1,2-diacyl-sn-glycerol + diphosphate. Its pathway is phospholipid metabolism; CDP-diacylglycerol biosynthesis; CDP-diacylglycerol from sn-glycerol 3-phosphate: step 3/3. Functionally, supplies CDP-diacylglycerol, which may play an important role as both a precursor to phosphoinositide biosynthesis in the plasma membrane and as a negative effector of phosphatidylinositol 4-kinase activity, thereby exerting an effect on cell proliferation via a lipid-dependent signal transduction cascade. The polypeptide is Putative phosphatidate cytidylyltransferase (Schizosaccharomyces pombe (strain 972 / ATCC 24843) (Fission yeast)).